A 145-amino-acid chain; its full sequence is Transmembrane protein CCDC163 (145 aa).

A helical transmembrane segment spans residues Leu38 to Leu54.

Its subcellular location is the membrane. The chain is Transmembrane protein CCDC163 from Homo sapiens (Human).